The following is a 599-amino-acid chain: UvrABC system protein C (599 aa).

A GIY-YIG domain is found at 15–93; the sequence is DNPGVYQYYD…IKTLQPRYNI (79 aa). Positions 207-242 constitute a UVR domain; sequence KDSMKDFKKVMTNLAQNMHFEEAQKIKEKIEILENY.

Belongs to the UvrC family. Interacts with UvrB in an incision complex.

Its subcellular location is the cytoplasm. The UvrABC repair system catalyzes the recognition and processing of DNA lesions. UvrC both incises the 5' and 3' sides of the lesion. The N-terminal half is responsible for the 3' incision and the C-terminal half is responsible for the 5' incision. The chain is UvrABC system protein C from Flavobacterium psychrophilum (strain ATCC 49511 / DSM 21280 / CIP 103535 / JIP02/86).